The chain runs to 212 residues: Cytidylate kinase (212 aa).

7–15 (GPAASGKGT) contributes to the ATP binding site.

The protein belongs to the cytidylate kinase family. Type 1 subfamily.

The protein resides in the cytoplasm. The enzyme catalyses CMP + ATP = CDP + ADP. It carries out the reaction dCMP + ATP = dCDP + ADP. The chain is Cytidylate kinase from Rhodopseudomonas palustris (strain ATCC BAA-98 / CGA009).